Consider the following 238-residue polypeptide: Ribonuclease PH (238 aa).

Residues R86 and 124 to 126 (GTR) contribute to the phosphate site.

Belongs to the RNase PH family. In terms of assembly, homohexameric ring arranged as a trimer of dimers.

It carries out the reaction tRNA(n+1) + phosphate = tRNA(n) + a ribonucleoside 5'-diphosphate. In terms of biological role, phosphorolytic 3'-5' exoribonuclease that plays an important role in tRNA 3'-end maturation. Removes nucleotide residues following the 3'-CCA terminus of tRNAs; can also add nucleotides to the ends of RNA molecules by using nucleoside diphosphates as substrates, but this may not be physiologically important. Probably plays a role in initiation of 16S rRNA degradation (leading to ribosome degradation) during starvation. The protein is Ribonuclease PH of Geobacter metallireducens (strain ATCC 53774 / DSM 7210 / GS-15).